Here is a 476-residue protein sequence, read N- to C-terminus: Efflux pump atB (476 aa).

The tract at residues 1-38 (MAPQLAGSSHSSSASDQAHRQSSDPALESGSDTHVGSI) is disordered. The next 10 helical transmembrane spans lie at 69–89 (LIVA…LAPL), 96–116 (KPVY…CAVA), 127–147 (FFNG…VGDL), 186–206 (WSFY…SLLV), 264–284 (LLLC…FGAF), 294–314 (FNLW…IIGI), 347–367 (LPPA…FAWT), 372–392 (VHWI…IMIF), 403–425 (YPLY…AAAF), and 440–460 (WAGF…YIFY).

Belongs to the major facilitator superfamily.

The protein resides in the cell membrane. Its function is as follows. Efflux pump that might be required for efficient secretion of terreic acid. This Aspergillus terreus (strain NIH 2624 / FGSC A1156) protein is Efflux pump atB.